A 634-amino-acid polypeptide reads, in one-letter code: Probable potassium transport system protein Kup (634 aa).

Transmembrane regions (helical) follow at residues 21–41, 58–78, 110–130, 148–168, 180–200, 217–237, 258–278, 296–316, 348–368, 377–397, 408–428, and 432–452; these read IILS…LYTL, VLGI…IKYV, IYIV…DGII, PHMK…LFLC, FGPI…YNII, FFLE…LAVT, WMYV…ALVL, GLYP…QALI, IYVP…VIGF, AYGV…IIYA, LLMI…ANII, and DGAW…RTWL.

The protein belongs to the HAK/KUP transporter (TC 2.A.72) family.

It localises to the cell inner membrane. The catalysed reaction is K(+)(in) + H(+)(in) = K(+)(out) + H(+)(out). In terms of biological role, transport of potassium into the cell. Likely operates as a K(+):H(+) symporter. This Xylella fastidiosa (strain Temecula1 / ATCC 700964) protein is Probable potassium transport system protein Kup.